The primary structure comprises 86 residues: Small ribosomal subunit protein bS20 (86 aa).

Belongs to the bacterial ribosomal protein bS20 family.

Binds directly to 16S ribosomal RNA. The sequence is that of Small ribosomal subunit protein bS20 from Rhodococcus jostii (strain RHA1).